We begin with the raw amino-acid sequence, 387 residues long: DNA double-strand break repair protein Mre11 (387 aa).

Residues aspartate 9, histidine 11, aspartate 50, and asparagine 85 each coordinate Mn(2+). Histidine 86 functions as the Proton donor in the catalytic mechanism. Histidine 150, aspartate 181, and histidine 183 together coordinate Mn(2+). Positions 365-387 are disordered; it reads AVLDDDADAADDDGRPTTVEEFQ. Over residues 366 to 375 the composition is skewed to acidic residues; that stretch reads VLDDDADAAD.

The protein belongs to the MRE11/RAD32 family. In terms of assembly, homodimer. Forms a heterotetramer composed of two Mre11 subunits and two Rad50 subunits. The cofactor is Mn(2+).

Its activity is regulated as follows. Nuclease activity is regulated by Rad50. Part of the Rad50/Mre11 complex, which is involved in the early steps of DNA double-strand break (DSB) repair. Mre11 binds to DSB ends and has both double-stranded 3'-5' exonuclease activity and single-stranded endonuclease activity. This is DNA double-strand break repair protein Mre11 from Halobacterium salinarum (strain ATCC 700922 / JCM 11081 / NRC-1) (Halobacterium halobium).